A 211-amino-acid polypeptide reads, in one-letter code: Small ribosomal subunit protein eS1 (211 aa).

It belongs to the eukaryotic ribosomal protein eS1 family.

This is Small ribosomal subunit protein eS1 from Methanothrix thermoacetophila (strain DSM 6194 / JCM 14653 / NBRC 101360 / PT) (Methanosaeta thermophila).